A 156-amino-acid polypeptide reads, in one-letter code: Small ribosomal subunit protein uS7 (156 aa).

Belongs to the universal ribosomal protein uS7 family. As to quaternary structure, part of the 30S ribosomal subunit. Contacts proteins S9 and S11.

One of the primary rRNA binding proteins, it binds directly to 16S rRNA where it nucleates assembly of the head domain of the 30S subunit. Is located at the subunit interface close to the decoding center, probably blocks exit of the E-site tRNA. This Campylobacter concisus (strain 13826) protein is Small ribosomal subunit protein uS7.